The chain runs to 1830 residues: Guanine nucleotide exchange factor SPIKE 1 (1830 aa).

N-acetylmethionine is present on Met-1. The interval 285 to 304 is disordered; that stretch reads NTGESASPSSPLAPSMTASS. Over residues 289–304 the composition is skewed to low complexity; the sequence is SASPSSPLAPSMTASS. The region spanning 463 to 622 is the C2 DOCK-type domain; that stretch reads FHCLYVYPVA…NIFKLRLRLC (160 aa). Ser-1051 carries the phosphoserine modification. Thr-1079 bears the Phosphothreonine mark. Phosphoserine is present on Ser-1095. Residues 1379-1828 enclose the DOCKER domain; sequence MAFAPVPDLH…LSHYIPAILS (450 aa).

It belongs to the DOCK family. Homodimer. Component of SCAR/WAVE and ARP2/3 complexes. Interacts directly with ARAC4/ROP2, ARAC1/ROP3, ARAC5/ROP4, ARAC6/ROP5, ARAC8/ROP10, ARAC9/ROP8, SCAR1, SCAR2, SCAR3, SCAR4, ABI1, ABI2, ABI3 and ABI4. Binds to the inactive GDP-bound form of ARAC3/ROP6. In terms of tissue distribution, expressed ubiquitously, in roots and aerial organs.

The protein resides in the cytoplasm. It localises to the endoplasmic reticulum membrane. The protein localises to the nucleus. In terms of biological role, guanine nucleotide exchange factor (GEF) for Rho and Rac. GEF proteins activate small GTPases by exchanging bound GDP for free GTP. Controls actin polymerization via the two heteromeric complexes WAVE and actin-related protein (ARP) 2/3. Involved in cytoskeletal reorganization required for cell shape (e.g. trichome and cotyledon) control and tissue development. Prevents cortical microtubules organization into parallel arrays oriented perpendicular to the axis of cell elongation to limit anisotropic cell growth during petal development, probably by triggering ARAC4/ROP2 and ARAC3/ROP6 activity. Promotes polarized growth and cell-cell adhesion in the leaf epidermis probably by promoting the formation of endoplasmic reticulum (ER) exit site (ERES) and/or trafficking between the ER and Golgi. Triggers ARAC3/ROP6 activation required for auxin-mediated inhibition of PIN2 internalization during gravitropic responses (, PubMed:22683260). The sequence is that of Guanine nucleotide exchange factor SPIKE 1 from Arabidopsis thaliana (Mouse-ear cress).